A 431-amino-acid chain; its full sequence is NADH-quinone oxidoreductase subunit F (431 aa).

54-63 (GRGGAGFPTG) is an NAD(+) binding site. 167-214 (GAGAYICGEETALLESLEGKKGMPRMKPPFPAGSGLYGCPTTVNNVES) provides a ligand contact to FMN. Residues cysteine 346, cysteine 349, cysteine 352, and cysteine 392 each contribute to the [4Fe-4S] cluster site.

The protein belongs to the complex I 51 kDa subunit family. FMN serves as cofactor. It depends on [4Fe-4S] cluster as a cofactor.

The catalysed reaction is a quinone + NADH + 5 H(+)(in) = a quinol + NAD(+) + 4 H(+)(out). NDH-1 shuttles electrons from NADH, via FMN and iron-sulfur (Fe-S) centers, to quinones in the respiratory chain. The immediate electron acceptor for the enzyme in this species is believed to be ubiquinone. Couples the redox reaction to proton translocation (for every two electrons transferred, four hydrogen ions are translocated across the cytoplasmic membrane), and thus conserves the redox energy in a proton gradient. This Rhodobacter capsulatus (Rhodopseudomonas capsulata) protein is NADH-quinone oxidoreductase subunit F (nuoF).